We begin with the raw amino-acid sequence, 359 residues long: DNA-directed RNA polymerase RPB3-11 homolog (359 aa).

It in the N-terminal section; belongs to the archaeal RpoD/eukaryotic RPB3 RNA polymerase subunit family. In the C-terminal section; belongs to the archaeal RpoL/eukaryotic RPB11/RPC19 RNA polymerase subunit family. Part of the viral DNA-directed RNA polymerase that consists of 8 polII-like subunits (RPB1, RPB2, RPB3, RPB5, RPB6, RPB7, RPB9, RPB10), a capping enzyme and a termination factor.

The protein localises to the host cytoplasm. The protein resides in the virion. In terms of biological role, component of the DNA-directed RNA polymerase (RNAP) that catalyzes the transcription in the cytoplasm of viral DNA into RNA using the four ribonucleoside triphosphates as substrates. The sequence is that of DNA-directed RNA polymerase RPB3-11 homolog from Ornithodoros (relapsing fever ticks).